The sequence spans 77 residues: DinI-like protein in retron Ec67 (77 aa).

It belongs to the DinI family.

This Escherichia coli protein is DinI-like protein in retron Ec67.